Consider the following 113-residue polypeptide: Large ribosomal subunit protein uL22 (113 aa).

It belongs to the universal ribosomal protein uL22 family. Part of the 50S ribosomal subunit.

This protein binds specifically to 23S rRNA; its binding is stimulated by other ribosomal proteins, e.g. L4, L17, and L20. It is important during the early stages of 50S assembly. It makes multiple contacts with different domains of the 23S rRNA in the assembled 50S subunit and ribosome. Functionally, the globular domain of the protein is located near the polypeptide exit tunnel on the outside of the subunit, while an extended beta-hairpin is found that lines the wall of the exit tunnel in the center of the 70S ribosome. This chain is Large ribosomal subunit protein uL22, found in Geobacillus thermodenitrificans (strain NG80-2).